Here is a 211-residue protein sequence, read N- to C-terminus: MSDSREIKKPWWFKKAKEWADEFYTRDQKLEDSDRRDLSKKYATISKASVVGAATGLSAGLGGPYAYRYYTTGALKGVKLPRTILLGVVSMVIMRNVAAKIAWDKELKKLDPSGELKQNYKSAHKTVDDVSLSDNSTSVQKKYGMMKFLKYRTAPRWAMYFEGTYQHPDRKFPNPDQMVQDLKGSRRAFPPFFSKADKFWHQIDRKDNDHT.

2 consecutive transmembrane segments (helical) span residues 45 to 67 (ISKASVVGAATGLSAGLGGPYAY) and 82 to 99 (RTILLGVVSMVIMRNVAA).

It belongs to the PUP1 family.

The protein resides in the mitochondrion membrane. In terms of biological role, mitochondrial protein that contributes to the enhanced virulence of C.glabrata strains that acquired azole resistance. In Candida glabrata (strain ATCC 2001 / BCRC 20586 / JCM 3761 / NBRC 0622 / NRRL Y-65 / CBS 138) (Yeast), this protein is PDR1 up-regulated protein 1.